The following is a 622-amino-acid chain: Elongation factor 4 (622 aa).

Residues 17–201 (ALIRNFCIIA…KVVAEVPAPV (185 aa)) form the tr-type G domain. GTP is bound by residues 29–34 (DHGKST) and 148–151 (NKID).

Belongs to the TRAFAC class translation factor GTPase superfamily. Classic translation factor GTPase family. LepA subfamily.

Its subcellular location is the cell membrane. The enzyme catalyses GTP + H2O = GDP + phosphate + H(+). Its function is as follows. Required for accurate and efficient protein synthesis under certain stress conditions. May act as a fidelity factor of the translation reaction, by catalyzing a one-codon backward translocation of tRNAs on improperly translocated ribosomes. Back-translocation proceeds from a post-translocation (POST) complex to a pre-translocation (PRE) complex, thus giving elongation factor G a second chance to translocate the tRNAs correctly. Binds to ribosomes in a GTP-dependent manner. The protein is Elongation factor 4 of Streptomyces avermitilis (strain ATCC 31267 / DSM 46492 / JCM 5070 / NBRC 14893 / NCIMB 12804 / NRRL 8165 / MA-4680).